Reading from the N-terminus, the 128-residue chain is ADA histone acetyltransferase complex component 2 (128 aa).

Its subcellular location is the cytoplasm. The protein localises to the nucleus. In Saccharomyces cerevisiae (strain ATCC 204508 / S288c) (Baker's yeast), this protein is ADA histone acetyltransferase complex component 2 (AHC2).